The chain runs to 412 residues: UPF0754 membrane protein syc0451_d (412 aa).

2 helical membrane passes run 8–28 (LWLL…DLAI) and 390–410 (IGGV…VWSL).

It belongs to the UPF0754 family.

The protein localises to the cell inner membrane. This chain is UPF0754 membrane protein syc0451_d, found in Synechococcus sp. (strain ATCC 27144 / PCC 6301 / SAUG 1402/1) (Anacystis nidulans).